The chain runs to 273 residues: Testis-specific serine/threonine-protein kinase 6 (273 aa).

The Protein kinase domain occupies 12 to 267 (YKLGRTIGEG…AGQVARNCWL (256 aa)). Residues 18–26 (IGEGSYSKV) and Lys41 contribute to the ATP site. The active-site Proton acceptor is Asp135.

The protein belongs to the protein kinase superfamily. CAMK Ser/Thr protein kinase family. As to quaternary structure, microtubule inner protein component of sperm flagellar doublet microtubules. Interacts with HSP90; this interaction stabilizes and activates TSSK6. Interacts with the heat shock proteins HSPCB, HSPA8 and HSPA1A. These interactions appear to be required for TSSK6 kinase activity. Interacts with TSACC; this interaction is direct and recruits TSACC to HSP90, which is essential for kinase activity. Requires Mg(2+) as cofactor. Post-translationally, autophosphorylated. In terms of processing, ubiquitinated; HSP90 activity negatively regulates ubiquitination and degradation. Highly expressed in testis. Expressed at lower levels in colon, small intestine, ovary, prostate, thymus, spleen and peripheral blood leukocytes.

The protein resides in the cytoplasm. It is found in the cytoskeleton. It localises to the flagellum axoneme. The protein localises to the nucleus. The enzyme catalyses L-seryl-[protein] + ATP = O-phospho-L-seryl-[protein] + ADP + H(+). It catalyses the reaction L-threonyl-[protein] + ATP = O-phospho-L-threonyl-[protein] + ADP + H(+). Functionally, serine/threonine-protein kinase component of the sperm flagellar doublet microtubules. May act as a regulator of sperm motility by mediating phosphorylation of sperm doublet microtubule proteins. Plays a role in DNA condensation during postmeiotic chromatin remodeling and histone-to-protamine transition during spermatogenesis. This Homo sapiens (Human) protein is Testis-specific serine/threonine-protein kinase 6.